The following is a 121-amino-acid chain: Small ribosomal subunit protein bS6 (121 aa).

The segment at 99–121 is disordered; the sequence is PLPAPRVAPGTEAPAEPEAAAPA. Positions 110–121 are enriched in low complexity; the sequence is EAPAEPEAAAPA.

Belongs to the bacterial ribosomal protein bS6 family.

Binds together with bS18 to 16S ribosomal RNA. This Synechococcus sp. (strain CC9311) protein is Small ribosomal subunit protein bS6.